Here is a 127-residue protein sequence, read N- to C-terminus: ALK and LTK ligand 1 (127 aa).

The first 27 residues, 1-27, serve as a signal peptide directing secretion; that stretch reads MWLTKPSTPVSALLLLALALSPPGTQG. Disulfide bonds link Cys88/Cys124 and Cys102/Cys111.

It belongs to the ALKAL family.

The protein resides in the secreted. The protein localises to the cell membrane. In terms of biological role, cytokine that acts as a physiological ligand for receptor tyrosine kinase LTK, leading to its activation. Monomeric ALKAL1 binds to LTK, leading to LTK homodimerization and activation. In contrast to ALKAL2, does not act as a potent physiological ligand for ALK. The protein is ALK and LTK ligand 1 of Mus musculus (Mouse).